A 111-amino-acid chain; its full sequence is Large ribosomal subunit protein uL22 (111 aa).

Belongs to the universal ribosomal protein uL22 family. Part of the 50S ribosomal subunit.

Its function is as follows. This protein binds specifically to 23S rRNA; its binding is stimulated by other ribosomal proteins, e.g. L4, L17, and L20. It is important during the early stages of 50S assembly. It makes multiple contacts with different domains of the 23S rRNA in the assembled 50S subunit and ribosome. The globular domain of the protein is located near the polypeptide exit tunnel on the outside of the subunit, while an extended beta-hairpin is found that lines the wall of the exit tunnel in the center of the 70S ribosome. This Xanthomonas oryzae pv. oryzae (strain PXO99A) protein is Large ribosomal subunit protein uL22.